The primary structure comprises 361 residues: Cytochrome P450 family protein EryCII (361 aa).

It belongs to the cytochrome P450 family. As to quaternary structure, heterotetramer composed of EryCII and EryCIII.

It participates in antibiotic biosynthesis; erythromycin biosynthesis. Its function is as follows. Involved in the erythromycin biosynthesis pathway. Acts by forming a complex and stabilizing the desosaminyl transferase EryCIII. This chain is Cytochrome P450 family protein EryCII (eryCII), found in Saccharopolyspora erythraea (strain ATCC 11635 / DSM 40517 / JCM 4748 / NBRC 13426 / NCIMB 8594 / NRRL 2338).